Here is a 656-residue protein sequence, read N- to C-terminus: DNA ligase (656 aa).

Residues 32 to 36 (DAVYD) and 81 to 82 (SL) contribute to the NAD(+) site. The N6-AMP-lysine intermediate role is filled by K112. Positions 133, 167, and 306 each coordinate NAD(+). Zn(2+) contacts are provided by C400, C403, C416, and C421. One can recognise a BRCT domain in the interval 577-656 (KSSSVFSDKT…ELLKRLKELD (80 aa)).

Belongs to the NAD-dependent DNA ligase family. LigA subfamily. It depends on Mg(2+) as a cofactor. Mn(2+) serves as cofactor.

It carries out the reaction NAD(+) + (deoxyribonucleotide)n-3'-hydroxyl + 5'-phospho-(deoxyribonucleotide)m = (deoxyribonucleotide)n+m + AMP + beta-nicotinamide D-nucleotide.. In terms of biological role, DNA ligase that catalyzes the formation of phosphodiester linkages between 5'-phosphoryl and 3'-hydroxyl groups in double-stranded DNA using NAD as a coenzyme and as the energy source for the reaction. It is essential for DNA replication and repair of damaged DNA. The protein is DNA ligase of Helicobacter pylori (strain J99 / ATCC 700824) (Campylobacter pylori J99).